The primary structure comprises 501 residues: Cytochrome P450 71B23 (501 aa).

A helical transmembrane segment spans residues Met1 to Thr21. Cys443 is a heme binding site.

Belongs to the cytochrome P450 family. It depends on heme as a cofactor.

The protein resides in the membrane. The protein is Cytochrome P450 71B23 (CYP71B23) of Arabidopsis thaliana (Mouse-ear cress).